The chain runs to 142 residues: MAEVSEEIRNLAARHQELQRQAEALRQEMGMIQTSISSCDQTIVTINELKAASEAGKPAETMVPVGFGSYVYAEVKNPDRIIVNLGAEFSAEETAEEAIETLNRRKEQLTKILEQMNASLTRLTQGMQTLEAEAAKLQPGQA.

This sequence belongs to the prefoldin subunit alpha family. In terms of assembly, heterohexamer of two alpha and four beta subunits.

It localises to the cytoplasm. Molecular chaperone capable of stabilizing a range of proteins. Seems to fulfill an ATP-independent, HSP70-like function in archaeal de novo protein folding. The protein is Prefoldin subunit alpha of Methanosarcina acetivorans (strain ATCC 35395 / DSM 2834 / JCM 12185 / C2A).